The primary structure comprises 298 residues: ATP synthase gamma chain (298 aa).

Belongs to the ATPase gamma chain family. As to quaternary structure, F-type ATPases have 2 components, CF(1) - the catalytic core - and CF(0) - the membrane proton channel. CF(1) has five subunits: alpha(3), beta(3), gamma(1), delta(1), epsilon(1). CF(0) has three main subunits: a, b and c.

Its subcellular location is the cell membrane. In terms of biological role, produces ATP from ADP in the presence of a proton gradient across the membrane. The gamma chain is believed to be important in regulating ATPase activity and the flow of protons through the CF(0) complex. This Frankia casuarinae (strain DSM 45818 / CECT 9043 / HFP020203 / CcI3) protein is ATP synthase gamma chain.